Reading from the N-terminus, the 293-residue chain is 33 kDa chaperonin (293 aa).

Intrachain disulfides connect Cys238-Cys240 and Cys271-Cys274.

Belongs to the HSP33 family. Post-translationally, under oxidizing conditions two disulfide bonds are formed involving the reactive cysteines. Under reducing conditions zinc is bound to the reactive cysteines and the protein is inactive.

It localises to the cytoplasm. In terms of biological role, redox regulated molecular chaperone. Protects both thermally unfolding and oxidatively damaged proteins from irreversible aggregation. Plays an important role in the bacterial defense system toward oxidative stress. This Staphylococcus aureus (strain USA300) protein is 33 kDa chaperonin.